The following is a 37-amino-acid chain: Cytochrome b6-f complex subunit 5 (37 aa).

The helical transmembrane segment at 5-25 (LLSGIVLGLMPVTLAGLFTTA) threads the bilayer.

It belongs to the PetG family. The 4 large subunits of the cytochrome b6-f complex are cytochrome b6, subunit IV (17 kDa polypeptide, PetD), cytochrome f and the Rieske protein, while the 4 small subunits are PetG, PetL, PetM and PetN. The complex functions as a dimer.

It localises to the plastid. It is found in the chloroplast thylakoid membrane. Component of the cytochrome b6-f complex, which mediates electron transfer between photosystem II (PSII) and photosystem I (PSI), cyclic electron flow around PSI, and state transitions. PetG is required for either the stability or assembly of the cytochrome b6-f complex. This Ostreococcus tauri protein is Cytochrome b6-f complex subunit 5.